The chain runs to 1648 residues: Cortactin-binding protein 2 (1648 aa).

Disordered regions lie at residues 1 to 26 (MATD…TAEA), 200 to 250 (EEKK…EEAH), 322 to 439 (PLTV…PGLN), 451 to 476 (GNAN…PTSR), and 492 to 608 (ALSR…PSID). Positions 119-274 (KMQERMSAQL…MEQMKKGSDG (156 aa)) form a coiled coil. Basic and acidic residues-rich tracts occupy residues 200–218 (EEKK…EKQR) and 225–250 (QLEK…EEAH). Composition is skewed to polar residues over residues 330–342 (STGS…NTKG) and 372–392 (LPSS…APDL). The span at 393–415 (SNSTPSTPSSTAPAAAQTPGTAP) shows a compositional bias: low complexity. Residues 492–503 (ALSRFTSPQAGA) show a composition bias toward polar residues. An Asymmetric dimethylarginine modification is found at arginine 495. ANK repeat units lie at residues 699–729 (GRPT…DINY), 733–762 (DGHS…RVDA), 766–795 (NGFT…NINH), 799–828 (GGQT…DRSI), 832–861 (DGWT…RAHG), and 901–931 (EGWT…EPER). The tract at residues 1438–1492 (SGAWRKVNTSPRKKPGHFSSPTWNKPDPKREGMRNKTIPHLNTNRNSSLSKQQSL) is disordered. Positions 1477-1492 (HLNTNRNSSLSKQQSL) are enriched in polar residues. Serine 1510 carries the post-translational modification Phosphoserine. The tract at residues 1522 to 1648 (SMCSSKSESD…KHEQVEKPNK (127 aa)) is disordered. Residues 1528-1547 (SESDISKIADSRDDLRKFDS) are compositionally biased toward basic and acidic residues. Composition is skewed to polar residues over residues 1548–1557 (SRTNPGTSAP) and 1571–1584 (PPSS…SNSK). Residues 1609–1623 (SQNTKRNSSSSNTRQ) show a composition bias toward low complexity. Residues 1630-1648 (SKEENWTLDKHEQVEKPNK) show a composition bias toward basic and acidic residues.

In terms of assembly, interacts with CTTN/cortactin SH3 domain. Interacts with STRN, STRN4/zinedin and MOB4/phocein; this interactions mediate the association with the STRIPAK core complex and may regulate dendritic spine distribution of the STRIPAK complex in hippocampal neurons. Activation of glutamate receptors weakens the interaction with STRN and STRN4. Isoform 2 is predominantly expressed in brain (at protein level). In the brain, expressed at high levels in hypothalamus and striatum and at lower levels in cerebellum and cortex.

The protein localises to the cytoplasm. Its subcellular location is the cell cortex. It localises to the cell projection. It is found in the dendritic spine. In terms of biological role, regulates the dendritic spine distribution of CTTN/cortactin in hippocampal neurons, and thus controls dendritic spinogenesis and dendritic spine maintenance. Associates with the striatin-interacting phosphatase and kinase (STRIPAK) core complex to regulate dendritic spine distribution of the STRIPAK complex in hippocampal neurons. The sequence is that of Cortactin-binding protein 2 (Cttnbp2) from Mus musculus (Mouse).